The sequence spans 453 residues: Cysteine--tRNA ligase (453 aa).

Cys-31 serves as a coordination point for Zn(2+). The 'HIGH' region motif lies at 33–43 (PTVYDNPHIGN). Zn(2+) is bound by residues Cys-213, His-238, and Glu-242. Residues 271–275 (KMAKS) carry the 'KMSKS' region motif. Lys-274 lines the ATP pocket.

It belongs to the class-I aminoacyl-tRNA synthetase family. As to quaternary structure, monomer. Zn(2+) serves as cofactor.

It localises to the cytoplasm. The catalysed reaction is tRNA(Cys) + L-cysteine + ATP = L-cysteinyl-tRNA(Cys) + AMP + diphosphate. The polypeptide is Cysteine--tRNA ligase (Pelagibacter ubique (strain HTCC1062)).